The sequence spans 435 residues: Glutamate-1-semialdehyde 2,1-aminomutase (435 aa).

Lys266 is modified (N6-(pyridoxal phosphate)lysine).

It belongs to the class-III pyridoxal-phosphate-dependent aminotransferase family. HemL subfamily. Homodimer. The cofactor is pyridoxal 5'-phosphate.

It is found in the cytoplasm. It catalyses the reaction (S)-4-amino-5-oxopentanoate = 5-aminolevulinate. It functions in the pathway porphyrin-containing compound metabolism; protoporphyrin-IX biosynthesis; 5-aminolevulinate from L-glutamyl-tRNA(Glu): step 2/2. The chain is Glutamate-1-semialdehyde 2,1-aminomutase from Coxiella burnetii (strain CbuK_Q154) (Coxiella burnetii (strain Q154)).